We begin with the raw amino-acid sequence, 246 residues long: 7-cyano-7-deazaguanine synthase (246 aa).

Residue F24–L34 participates in ATP binding. Residues C209, C219, C222, and C225 each contribute to the Zn(2+) site.

Belongs to the QueC family. It depends on Zn(2+) as a cofactor.

It catalyses the reaction 7-carboxy-7-deazaguanine + NH4(+) + ATP = 7-cyano-7-deazaguanine + ADP + phosphate + H2O + H(+). Its pathway is purine metabolism; 7-cyano-7-deazaguanine biosynthesis. Catalyzes the ATP-dependent conversion of 7-carboxy-7-deazaguanine (CDG) to 7-cyano-7-deazaguanine (preQ(0)). This Polynucleobacter asymbioticus (strain DSM 18221 / CIP 109841 / QLW-P1DMWA-1) (Polynucleobacter necessarius subsp. asymbioticus) protein is 7-cyano-7-deazaguanine synthase.